The sequence spans 111 residues: Phosphoribosyl-ATP pyrophosphatase (111 aa).

The protein belongs to the PRA-PH family.

Its subcellular location is the cytoplasm. The catalysed reaction is 1-(5-phospho-beta-D-ribosyl)-ATP + H2O = 1-(5-phospho-beta-D-ribosyl)-5'-AMP + diphosphate + H(+). It participates in amino-acid biosynthesis; L-histidine biosynthesis; L-histidine from 5-phospho-alpha-D-ribose 1-diphosphate: step 2/9. This is Phosphoribosyl-ATP pyrophosphatase from Azotobacter vinelandii (strain DJ / ATCC BAA-1303).